A 345-amino-acid polypeptide reads, in one-letter code: Tryptophan--tRNA ligase (345 aa).

Residues 12 to 14 and 20 to 21 each bind ATP; these read RPT and GH. Positions 13–21 match the 'HIGH' region motif; the sequence is PTGKLHLGH. An L-tryptophan-binding site is contributed by Asp-144. ATP is bound by residues 156–158, Leu-194, and 202–206; these read GKD and KMSKS. The 'KMSKS' region signature appears at 202–206; the sequence is KMSKS.

Belongs to the class-I aminoacyl-tRNA synthetase family. Homodimer.

It localises to the cytoplasm. It carries out the reaction tRNA(Trp) + L-tryptophan + ATP = L-tryptophyl-tRNA(Trp) + AMP + diphosphate + H(+). In terms of biological role, catalyzes the attachment of tryptophan to tRNA(Trp). This chain is Tryptophan--tRNA ligase, found in Chlamydia caviae (strain ATCC VR-813 / DSM 19441 / 03DC25 / GPIC) (Chlamydophila caviae).